The primary structure comprises 438 residues: MFTPLSSVTALLALSSAFLGAQAGCKPKNYGPEKPHGGNGGNRGSGNGNSTSKFIAKGYYTGWNSDDFKPEQVSWSKYTQLAYAFGIPTDSANFNLSLDASNAESLDPFVTAAHEHGVQVTLSVGGWTGSLHLSYAVANAQNRTTFVKTLVDFVVKHKLDGLDVDWQSPNKLGLPCNAINANDTANLLLFLQELRKDPVGAKMILSATGNIVPWTDANGNPSADVSAFGKVLDHVTPLLYDVWGSWSDSVGPNSPLNDTCAAPDKQQGSVVSAVAKWNKAGIPLEKIVLGVGAYGHAFSVNKTKAYVNGTKELAAYPPFNKDIHPKGDKWDDPAGVDPCGVATPDGGIFTFWGLIEHGYLNEDGSPKRPYRFDNCSRTAYAYNEEEQVMVSFDDAQAFKEKGAFIKSQGLGGFSVWNAGSDHKDILLDAIRSGAGLSK.

The signal sequence occupies residues M1–A23. The GH18 domain occupies F54–S437. W416 is a binding site for chitin.

This sequence belongs to the glycosyl hydrolase 18 family.

Its subcellular location is the secreted. Its function is as follows. Catalytically impaired chitinase that binds efficiently to chitin, but not to chitosan, xylan, or cellulose. Despite the lack of chitinolytic activity, retains substrate binding specificity and acts as an effector to prevent chitin-triggered immunity by sequestering immunogenic chitin fragments. Does not function in the protection of fungal cell wall against plant hydrolytic enzymes. This is chitinase-like effector from Moniliophthora perniciosa (Witches'-broom disease fungus).